A 243-amino-acid chain; its full sequence is UPF0246 protein MGAS10750_Spy1880 (243 aa).

This sequence belongs to the UPF0246 family.

This Streptococcus pyogenes serotype M4 (strain MGAS10750) protein is UPF0246 protein MGAS10750_Spy1880.